We begin with the raw amino-acid sequence, 603 residues long: MDTKIGLEVHFQLNTGKLFCRCPVEQSSGELMRFSRKLHISASELGNIDAAASYESMRSRSFQYVVTDNSCLVEMDEEPPKTPDERAIATAISVSKALNCDIVDHITYMRKIVIDGSNTTGFQRTAIVGINGHIETSKGPVRISTVCLEEDAARKIEEIGNTVVYSLDRLGIPLIEISTEPDIVDEDHAVEVARSIGYIVISTGNARHAVDAVRQDVNFSMGYGRVEIKGVSKLTQIRDVIRYEKERQENLRAAVDLIKSRGGLDRVSFNLKDVSDLFAGTKSKIIRSGIESGGVYAGILKNMAGTLKNGKLRMGKEIADLVRSYGIKGVMHSDELPGYGLTQDEVEALYRYLGKGDNDAVLLIAINQSRVKMIENSIFDRIQKIISMDLSETRGPAGEETVFLRPMPGKDRMYPETDIPVIKVDSKLMEMSSSIKPRTYAEVVQDLVDRYGISKQNAEYIASEMVVDAFRNIAEFVEAREAARILTQIVPDLERRTKKIIDHDRIIELCRRSKDLHFDRYQLEMALEILYERDDVASVLGDSRLKELSREEIKSIIREILSSGRNATQNSIIALIKEKTERVFDPRVAMECFNEVKNKNNVF.

This sequence belongs to the GatB/GatE family. GatE subfamily. As to quaternary structure, heterodimer of GatD and GatE.

The enzyme catalyses L-glutamyl-tRNA(Gln) + L-glutamine + ATP + H2O = L-glutaminyl-tRNA(Gln) + L-glutamate + ADP + phosphate + H(+). Functionally, allows the formation of correctly charged Gln-tRNA(Gln) through the transamidation of misacylated Glu-tRNA(Gln) in organisms which lack glutaminyl-tRNA synthetase. The reaction takes place in the presence of glutamine and ATP through an activated gamma-phospho-Glu-tRNA(Gln). The GatDE system is specific for glutamate and does not act on aspartate. The polypeptide is Glutamyl-tRNA(Gln) amidotransferase subunit E (Thermoplasma acidophilum (strain ATCC 25905 / DSM 1728 / JCM 9062 / NBRC 15155 / AMRC-C165)).